The sequence spans 761 residues: T-box protein 1 (761 aa).

Disordered stretches follow at residues 1–85 (MLGR…QPLT) and 167–210 (QTDP…CSSP). Polar residues-rich tracts occupy residues 37–61 (DLQN…NQAG) and 167–179 (QTDP…FPQA). Composition is skewed to low complexity over residues 180–191 (SPSDLSTTSSQS) and 198–210 (SSPS…CSSP). Residues 287–456 (LWRKFHEHRT…HNPFAKGFRD (170 aa)) constitute a DNA-binding region (T-box). Residues 496–510 (TTGFPCQTNPTQRSN) are compositionally biased toward polar residues. 3 disordered regions span residues 496–515 (TTGF…QHEG), 545–612 (SGDA…TPAH), and 637–687 (VCSS…LLTT). Residues 600 to 612 (GCERSNEKHTPAH) are compositionally biased toward basic and acidic residues. Positions 637-646 (VCSSDNSNPD) are enriched in polar residues. Positions 656–687 (SPAGSGSPSVTSGTSLFTSGSSAAPSPPLLTT) are enriched in low complexity.

The protein localises to the nucleus. Functionally, probable transcriptional regulator involved in developmental processes. The sequence is that of T-box protein 1 (tbr1) from Patiria pectinifera (Starfish).